A 302-amino-acid chain; its full sequence is Cyclin-dependent kinase 1 (302 aa).

One can recognise a Protein kinase domain in the interval 4–287 (YAKIEKIGEG…ARKALLHPYF (284 aa)). ATP-binding positions include 10 to 18 (IGEGTYGVV) and Lys33. The residue at position 14 (Thr14) is a Phosphothreonine. Tyr15 carries the phosphotyrosine; by wee1 and wee2 modification. The Proton acceptor role is filled by Asp128. Thr161 is subject to Phosphothreonine; by cak.

This sequence belongs to the protein kinase superfamily. CMGC Ser/Thr protein kinase family. CDC2/CDKX subfamily. As to quaternary structure, forms a stable but non-covalent complex with a regulatory subunit and with a cyclin. In terms of processing, phosphorylation at Tyr-15 by wee1 and wee2 inhibits the protein kinase activity and acts negative regulator of entry into mitosis (G2 to M transition).

It is found in the nucleus. The protein localises to the cytoplasm. Its subcellular location is the cytoskeleton. It localises to the microtubule organizing center. The protein resides in the centrosome. It carries out the reaction L-seryl-[protein] + ATP = O-phospho-L-seryl-[protein] + ADP + H(+). The enzyme catalyses L-threonyl-[protein] + ATP = O-phospho-L-threonyl-[protein] + ADP + H(+). The catalysed reaction is [DNA-directed RNA polymerase] + ATP = phospho-[DNA-directed RNA polymerase] + ADP + H(+). With respect to regulation, phosphorylation at Thr-14 or Tyr-15 inactivates the enzyme, while phosphorylation at Thr-161 activates it. In terms of biological role, plays a key role in the control of the eukaryotic cell cycle by modulating the centrosome cycle as well as mitotic onset; promotes G2-M transition via association with multiple interphase cyclins. During G2 and early mitosis, CDC25A/B/C-mediated dephosphorylation activates CDK1/cyclin complexes which phosphorylate several substrates that trigger at least centrosome separation, Golgi dynamics, nuclear envelope breakdown and chromosome condensation. Once chromosomes are condensed and aligned at the metaphase plate, CDK1 activity is switched off by WEE1- and PKMYT1-mediated phosphorylation to allow sister chromatid separation, chromosome decondensation, reformation of the nuclear envelope and cytokinesis. Catalyzes lamin (LMNA, LMNB1 and LMNB2) phosphorylation at the onset of mitosis, promoting nuclear envelope breakdown. The sequence is that of Cyclin-dependent kinase 1 (CDK1) from Rana dybowskii (Dybovsky's frog).